The chain runs to 189 residues: uncharacterized protein (189 aa).

The protein belongs to the OsmC/Ohr family.

This is an uncharacterized protein from Methanocaldococcus jannaschii (strain ATCC 43067 / DSM 2661 / JAL-1 / JCM 10045 / NBRC 100440) (Methanococcus jannaschii).